A 375-amino-acid chain; its full sequence is Pulmonary surfactant-associated protein D (375 aa).

The signal sequence occupies residues 1–21 (MLLFLLSALVLLTQSLGYLEA). Residues Cys-35 and Cys-40 each carry the S-nitrosocysteine modification. Residues 43-221 (VESGLPGRDG…DKGAKGESGL (179 aa)) form a disordered region. The 177-residue stretch at 46–222 (GLPGRDGRDG…KGAKGESGLP (177 aa)) folds into the Collagen-like domain. Positions 50 to 65 (RDGRDGREGPRGEKGD) are enriched in basic and acidic residues. A 4-hydroxyproline modification is found at Pro-78. Lys-87 carries the post-translational modification 5-hydroxylysine. N-linked (GlcNAc...) asparagine glycosylation is present at Asn-90. 4-hydroxyproline is present on Pro-96. Lys-99 carries the 5-hydroxylysine modification. A compositionally biased stretch (pro residues) spans 105–114 (SGPPGPPGVP). Low complexity-rich tracts occupy residues 116 to 132 (PAGREGPLGKQGNIGPQ) and 138 to 150 (KGEAGPKGEVGAP). 4-hydroxyproline occurs at positions 171 and 177. Residues 173–189 (ERGAPGNAGAAGSAGVM) are compositionally biased toward low complexity. A compositionally biased stretch (basic and acidic residues) spans 204 to 216 (KGDKGVPGDKGAK). Residues 223 to 251 (DVASLRQQVEALQKQVQHLQAAFSQYKKV) are a coiled coil. In terms of domain architecture, C-type lectin spans 260–374 (VGEKIFKTAG…CGEKRLVVCE (115 aa)). Disulfide bonds link Cys-281/Cys-373 and Cys-351/Cys-365.

It belongs to the SFTPD family. As to quaternary structure, oligomeric complex of 4 set of homotrimers. Hydroxylation on proline residues within the sequence motif, GXPG, is most likely to be 4-hydroxy as this fits the requirement for 4-hydroxylation in vertebrates. Post-translationally, S-nitrosylation at Cys-35 and Cys-40 alters the quaternary structure which results in a pro-inflammatory chemoattractive signaling activity with macrophages.

The protein localises to the secreted. The protein resides in the extracellular space. It is found in the extracellular matrix. Its subcellular location is the surface film. Functionally, contributes to the lung's defense against inhaled microorganisms, organic antigens and toxins. Interacts with compounds such as bacterial lipopolysaccharides, oligosaccharides and fatty acids and modulates leukocyte action in immune response. May participate in the extracellular reorganization or turnover of pulmonary surfactant. Binds strongly maltose residues and to a lesser extent other alpha-glucosyl moieties. The polypeptide is Pulmonary surfactant-associated protein D (SFTPD) (Macaca mulatta (Rhesus macaque)).